The chain runs to 1208 residues: E3 ubiquitin-protein ligase DZIP3 (1208 aa).

Basic and acidic residues predominate over residues 10-29 (VRHPAVEDQRKEETENKLEK). Disordered stretches follow at residues 10 to 38 (VRHP…NKQE) and 637 to 698 (GTSI…PHSV). Coiled coils occupy residues 14–43 (AVED…DIPT), 647–676 (ESLK…SKED), 792–853 (IASL…SKLN), and 904–939 (QLKA…KVKQ). A compositionally biased stretch (polar residues) spans 637-647 (GTSIPSESSTE). Residues 648 to 657 (SLKDLQEVKS) show a composition bias toward basic and acidic residues. Over residues 658–669 (KQRKKKKTKNKK) the composition is skewed to basic residues. Positions 670-693 (NKDSKEDQVPYVVEKEEQLRKEQA) are enriched in basic and acidic residues. The interval 1088–1145 (KSQSQGKSVSNVNCVSPSHSPSQPDAAQPPKPAWRPLTSQGPATWEGASNPDEEEEEE) is disordered. Polar residues predominate over residues 1089–1112 (SQSQGKSVSNVNCVSPSHSPSQPD). The segment at 1148 to 1188 (CVICHENLSPENLSVLPCAHKFHAQCIRPWLMQQGTCPTCR) adopts an RING-type; atypical zinc-finger fold.

Interacts with DAZ proteins. Widely expressed at low level. Highly expressed in skeletal muscle, kidney and heart. Expressed at low level in placenta, lung, brain, liver and pancreas.

Its subcellular location is the cytoplasm. The catalysed reaction is S-ubiquitinyl-[E2 ubiquitin-conjugating enzyme]-L-cysteine + [acceptor protein]-L-lysine = [E2 ubiquitin-conjugating enzyme]-L-cysteine + N(6)-ubiquitinyl-[acceptor protein]-L-lysine.. It functions in the pathway protein modification; protein ubiquitination. E3 Ubiquitin ligase proteins mediate ubiquitination and subsequent proteasomal degradation of target proteins. E3 ubiquitin ligases accept ubiquitin from an E2 ubiquitin-conjugating enzyme in the form of a thioester and then directly transfers the ubiquitin to targeted substrates. Able to specifically bind RNA. The sequence is that of E3 ubiquitin-protein ligase DZIP3 (DZIP3) from Homo sapiens (Human).